The chain runs to 543 residues: MPEYPTEDTNASGKTSGSSPDDHTDDNAPSFFSCENLCIVQVPVSTGSLNGFSIGFVAVYMHLYEIFSGCSALESSGACSGNSKCTWIPNNSTCVWKDCNGAAGATTCKDGSGYNSLESGLFACSMIVGSMIGSIFAGKFLSKFGLKMSFIVSGVLGIVGSALIHVATRGSTLWVMCVGRFLMGLVLGLVCVASPMYVNENAHPKYRKTIGVLFQVFTTFGIMFAALLGLAIVKTPGHDKASGLLWRMQVFCSVSTALSALLLVLGLVVRKSKTSFAGGVDSAGEGVLDPNEYSVRQMLGPLAVGAVTAGTLQLTGINAVMNYAPEIMRNIGMDPMEGNSAVMSWNFVTALVAIPLVSRFTMRQLFLACSFMASCACLIMCGIPVYPGVASVDNRNIVATVGIAVFIAAFEFGVGSCFFVLAQDLFPRSFRPTGSSFVVMAQFIFNIMINLLYPITVEAISGGKGKSPEKGQSVSFIIFGIIGIICFVLQLRYLTPWEDGQGTSTSPTARCNAPTSPNNGEGEPATADMSPVEMSTPKHSGAA.

Positions 1 to 24 are disordered; it reads MPEYPTEDTNASGKTSGSSPDDHT. The Cytoplasmic portion of the chain corresponds to 1–38; it reads MPEYPTEDTNASGKTSGSSPDDHTDDNAPSFFSCENLC. Residues 7–19 show a composition bias toward polar residues; the sequence is EDTNASGKTSGSS. A helical membrane pass occupies residues 39 to 59; it reads IVQVPVSTGSLNGFSIGFVAV. At 60-120 the chain is on the extracellular side; sequence YMHLYEIFSG…GSGYNSLESG (61 aa). N-linked (GlcNAc...) asparagine glycans are attached at residues N90 and N91. The chain crosses the membrane as a helical span at residues 121–141; that stretch reads LFACSMIVGSMIGSIFAGKFL. Residues 142-147 lie on the Cytoplasmic side of the membrane; the sequence is SKFGLK. Residues 148–168 form a helical membrane-spanning segment; that stretch reads MSFIVSGVLGIVGSALIHVAT. Residues 169–172 are Extracellular-facing; it reads RGST. The chain crosses the membrane as a helical span at residues 173–193; that stretch reads LWVMCVGRFLMGLVLGLVCVA. Topologically, residues 194–212 are cytoplasmic; that stretch reads SPMYVNENAHPKYRKTIGV. The chain crosses the membrane as a helical span at residues 213–233; it reads LFQVFTTFGIMFAALLGLAIV. Residues 234–248 lie on the Extracellular side of the membrane; sequence KTPGHDKASGLLWRM. The chain crosses the membrane as a helical span at residues 249–269; it reads QVFCSVSTALSALLLVLGLVV. Residues 270–300 lie on the Cytoplasmic side of the membrane; the sequence is RKSKTSFAGGVDSAGEGVLDPNEYSVRQMLG. Residues 301 to 321 traverse the membrane as a helical segment; it reads PLAVGAVTAGTLQLTGINAVM. Topologically, residues 322-337 are extracellular; sequence NYAPEIMRNIGMDPME. A helical membrane pass occupies residues 338-358; that stretch reads GNSAVMSWNFVTALVAIPLVS. Residues 359–364 lie on the Cytoplasmic side of the membrane; sequence RFTMRQ. The helical transmembrane segment at 365-385 threads the bilayer; sequence LFLACSFMASCACLIMCGIPV. At 386 to 400 the chain is on the extracellular side; sequence YPGVASVDNRNIVAT. Residues 401-421 traverse the membrane as a helical segment; sequence VGIAVFIAAFEFGVGSCFFVL. The Cytoplasmic portion of the chain corresponds to 422–436; that stretch reads AQDLFPRSFRPTGSS. A helical transmembrane segment spans residues 437–457; it reads FVVMAQFIFNIMINLLYPITV. Topologically, residues 458–470 are extracellular; the sequence is EAISGGKGKSPEK. The chain crosses the membrane as a helical span at residues 471–491; it reads GQSVSFIIFGIIGIICFVLQL. The Cytoplasmic segment spans residues 492–543; the sequence is RYLTPWEDGQGTSTSPTARCNAPTSPNNGEGEPATADMSPVEMSTPKHSGAA. The segment covering 503–519 has biased composition (polar residues); the sequence is TSTSPTARCNAPTSPNN. The segment at 503-543 is disordered; sequence TSTSPTARCNAPTSPNNGEGEPATADMSPVEMSTPKHSGAA.

The protein belongs to the major facilitator superfamily. Sugar transporter (TC 2.A.1.1) family.

The protein localises to the membrane. Functionally, facilitative glucose transporter. Binds D-fructose and cytochalasin-B, but not D-galactose. This Trypanosoma vivax (Duttonella vivax) protein is Glucose transporter HT1 (HT1).